Consider the following 835-residue polypeptide: MGILNKIFGTYSERELRRVNPIVNKIEALDEKMQSLKDEDFKLKTEEFKSRLEKGEKLDDILPEAFALVREAAHRTIGLKHYREQLIGGVVLHQGRIGEMKTGEGKTLVATLPAYVNALTGKGVHIVTVNDYLAKRDRDLMAPVYEFLGLKVGVILHNLNNEERQEAYGSDITYGTNSEFGFDYLRDNMVVYKEERVQRKLNFSIVDEVDSILIDEARTPLIISGQGEKSTEFYKVADYFTKSLIAEKDFTIDEKANSAMLTDEGVNKAENFFKVDNYADAENMEIQHHVVQALKANYVMKKDKDYMIKDGEILIVDEFTGRAMEGRRYSDGLHQAIEAKEGVRVERESKTLATITYQNYFRMYNKLSGMTGTAQTEENEFREIYGLDVIVIPTHEPIARIDNADVVYKSEKGKFKAIVDEIVERYKKGQPMLVGTVSIEKSEMLSSMLKKKGVPHQVLNAKYHEKEAEIISHAGEYGMVTIATNMAGRGTDIKLTKEAEEAGGLMIIGTERHESRRIDNQLRGRSGRQGDPGESRFFVSLEDDLMRIFGSERIQGIVDKLGLAEDEAIESKMVSSAIESAQKKVEGNNFDIRKTLLQYDDVINKQREIIYKQRSEVLEGEDLKDQIRDMIRDVVYTAVNSHISGVEEEFQTELQNLVNYLEDICLPKALVKVKDISNLSDEEIKEKLLEAVENIYIRKEKEIGEEQIREIERVILLRVVDTKWMDHIDDMDHLKQGIGLRAYRQQDPVQAYQFEGSEMFEEMIYNIKVDTVRYLFHVEVEKAPEREKVAKETSTNYDEDSVKKQPIKKENRIGRNDMCPCGSGKKYKNCCGRMA.

ATP is bound by residues glutamine 85, 103–107 (GEGKT), and aspartate 492. Residues cysteine 819, cysteine 821, cysteine 830, and cysteine 831 each coordinate Zn(2+).

The protein belongs to the SecA family. In terms of assembly, monomer and homodimer. Part of the essential Sec protein translocation apparatus which comprises SecA, SecYEG and auxiliary proteins SecDF. Other proteins may also be involved. Requires Zn(2+) as cofactor.

The protein localises to the cell membrane. It localises to the cytoplasm. It carries out the reaction ATP + H2O + cellular proteinSide 1 = ADP + phosphate + cellular proteinSide 2.. Its function is as follows. Part of the Sec protein translocase complex. Interacts with the SecYEG preprotein conducting channel. Has a central role in coupling the hydrolysis of ATP to the transfer of proteins into and across the cell membrane, serving as an ATP-driven molecular motor driving the stepwise translocation of polypeptide chains across the membrane. This chain is Protein translocase subunit SecA, found in Clostridium botulinum (strain ATCC 19397 / Type A).